Consider the following 486-residue polypeptide: Ribulose bisphosphate carboxylase large chain (486 aa).

Substrate contacts are provided by Asn-126 and Thr-176. The active-site Proton acceptor is Lys-178. Lys-180 contributes to the substrate binding site. Residues Lys-204, Asp-206, and Glu-207 each coordinate Mg(2+). Position 204 is an N6-carboxylysine (Lys-204). His-296 (proton acceptor) is an active-site residue. Residues Arg-297, His-329, and Ser-381 each coordinate substrate.

This sequence belongs to the RuBisCO large chain family. Type I subfamily. In terms of assembly, heterohexadecamer of 8 large chains and 8 small chains. It depends on Mg(2+) as a cofactor.

The enzyme catalyses 2 (2R)-3-phosphoglycerate + 2 H(+) = D-ribulose 1,5-bisphosphate + CO2 + H2O. It catalyses the reaction D-ribulose 1,5-bisphosphate + O2 = 2-phosphoglycolate + (2R)-3-phosphoglycerate + 2 H(+). Functionally, ruBisCO catalyzes two reactions: the carboxylation of D-ribulose 1,5-bisphosphate, the primary event in carbon dioxide fixation, as well as the oxidative fragmentation of the pentose substrate. Both reactions occur simultaneously and in competition at the same active site. This Methylacidiphilum infernorum (isolate V4) (Methylokorus infernorum (strain V4)) protein is Ribulose bisphosphate carboxylase large chain.